The following is a 274-amino-acid chain: Acetyl-coenzyme A carboxylase carboxyl transferase subunit alpha (274 aa).

The 245-residue stretch at 1-245 (MENSQELTPW…RENLKKAIEG (245 aa)) folds into the CoA carboxyltransferase C-terminal domain.

This sequence belongs to the AccA family. In terms of assembly, acetyl-CoA carboxylase is a heterohexamer composed of biotin carboxyl carrier protein (AccB), biotin carboxylase (AccC) and two subunits each of ACCase subunit alpha (AccA) and ACCase subunit beta (AccD).

It localises to the cytoplasm. It catalyses the reaction N(6)-carboxybiotinyl-L-lysyl-[protein] + acetyl-CoA = N(6)-biotinyl-L-lysyl-[protein] + malonyl-CoA. It functions in the pathway lipid metabolism; malonyl-CoA biosynthesis; malonyl-CoA from acetyl-CoA: step 1/1. Functionally, component of the acetyl coenzyme A carboxylase (ACC) complex. First, biotin carboxylase catalyzes the carboxylation of biotin on its carrier protein (BCCP) and then the CO(2) group is transferred by the carboxyltransferase to acetyl-CoA to form malonyl-CoA. In Clostridium acetobutylicum (strain ATCC 824 / DSM 792 / JCM 1419 / IAM 19013 / LMG 5710 / NBRC 13948 / NRRL B-527 / VKM B-1787 / 2291 / W), this protein is Acetyl-coenzyme A carboxylase carboxyl transferase subunit alpha.